Reading from the N-terminus, the 188-residue chain is MAGDLEGGKSLSGLLSGLAQNAFHGHSGVTEELLHSQLYPEVPPEEFRPFLAKMRGLLKSIASADMDFNQLEAFLTAQTKKQGGITSEQAAVISKFWKSHKIKIRESLMKQSRWDNGLRGLSWRVDGKSQSRHSTQIHSPVAIIELEFGKNGQESEFLCLEFDEVKVKQILKKLSEVEESINRLMQAA.

The segment at 1-122 (MAGDLEGGKS…RWDNGLRGLS (122 aa)) is sufficient for interaction with SLC12A2. Residues histidine 100, methionine 109, and histidine 133 each coordinate Cu cation. The region spanning 117 to 185 (GLRGLSWRVD…EVEESINRLM (69 aa)) is the COMM domain. The interval 124 to 188 (RVDGKSQSRH…ESINRLMQAA (65 aa)) is required for binding to PtdIns(4,5)P2.

It belongs to the COMM domain-containing protein 1 family. Component of the commander complex consisting of the CCC subcomplex and the retriever subcomplex. Component of the CCC (COMMD/CCDC22/CCDC93) subcomplex consisting of COMMD1, COMMD2, COMMD3, COMMD4, COMMD5, COMMD6, COMMD7, COMMD8, COMMD9, COMMD10, CCDC22 and CCDC93; within the complex forms a heterodimer with COMMD6. Interacts with VPS35L; the interaction associates the CCC complex with the retriever complex. Identified in a complex with an E3 ubiquitin ligase complex composed of TCEB1/elongin C, CUL2, SOCS1 and RBX1; in the complex interacts directly with SOCS1 and CUL2. Identified in a complex with NF-kappa-B. Interacts directly with SLC12A2. Interacts directly with ATP7B (via the N-terminal region). Interacts with ATP7A. Interacts with FAM107A; this interaction stabilizes COMMD1 in the nucleus. Interacts with CCS, CDKN2A, RELA, REL, RELB, NFKB1/p105, NFKB2/p100, NFKBIB, SCNN1D, SCNN1B, CFTR, CLU, SGK1, AKT1, CUL1, CUL2, CUL3, CUL4A, CUL4B, CUL5, CUL7, HIF1A. In terms of processing, ubiquitinated; undergoes both 'Lys-63'- and 'Lys-48'-linked polyubiquitination. Ubiquitinated by XIAP, leading to its proteasomal degradation.

It is found in the nucleus. Its subcellular location is the cytoplasm. The protein resides in the endosome membrane. It localises to the cytoplasmic vesicle. The protein localises to the early endosome. It is found in the recycling endosome. Functionally, scaffold protein in the commander complex that is essential for endosomal recycling of transmembrane cargos; the commander complex is composed of the CCC subcomplex and the retriever subcomplex. Can modulate activity of cullin-RING E3 ubiquitin ligase (CRL) complexes by displacing CAND1; in vitro promotes CRL E3 activity and dissociates CAND1 from CUL1 and CUL2. Promotes ubiquitination of NF-kappa-B subunit RELA and its subsequent proteasomal degradation. Down-regulates NF-kappa-B activity. Involved in the regulation of membrane expression and ubiquitination of SLC12A2. Modulates Na(+) transport in epithelial cells by regulation of apical cell surface expression of amiloride-sensitive sodium channel (ENaC) subunits and by promoting their ubiquitination presumably involving NEDD4L. Promotes the localization of SCNN1D to recycling endosomes. Promotes CFTR cell surface expression through regulation of its ubiquitination. Down-regulates SOD1 activity by interfering with its homodimerization. Plays a role in copper ion homeostasis. Involved in copper-dependent ATP7A trafficking between the trans-Golgi network and vesicles in the cell periphery; the function is proposed to depend on its association within the CCC complex and cooperation with the WASH complex on early endosomes. Can bind one copper ion per monomer. May function to facilitate biliary copper excretion within hepatocytes. Binds to phosphatidylinositol 4,5-bisphosphate (PtdIns(4,5)P2). Involved in the regulation of HIF1A-mediated transcription; competes with ARNT/Hif-1-beta for binding to HIF1A resulting in decreased DNA binding and impaired transcriptional activation by HIF-1. Negatively regulates neuroblastoma G1/S phase cell cycle progression and cell proliferation by stimulating ubiquitination of NF-kappa-B subunit RELA and NF-kappa-B degradation in a FAM107A- and actin-dependent manner. The polypeptide is COMM domain-containing protein 1 (Commd1) (Mus musculus (Mouse)).